The following is a 207-amino-acid chain: Urease accessory protein UreG (207 aa).

Residue 14-21 participates in GTP binding; sequence GPVGSGKT.

The protein belongs to the SIMIBI class G3E GTPase family. UreG subfamily. Homodimer. UreD, UreF and UreG form a complex that acts as a GTP-hydrolysis-dependent molecular chaperone, activating the urease apoprotein by helping to assemble the nickel containing metallocenter of UreC. The UreE protein probably delivers the nickel.

The protein resides in the cytoplasm. Functionally, facilitates the functional incorporation of the urease nickel metallocenter. This process requires GTP hydrolysis, probably effectuated by UreG. This chain is Urease accessory protein UreG, found in Tolumonas auensis (strain DSM 9187 / NBRC 110442 / TA 4).